The sequence spans 161 residues: Allophycocyanin subunit alpha 1 (161 aa).

Position 71 is an N4-methylasparagine (Asn-71). Residue Cys-81 participates in (2R,3E)-phycocyanobilin binding.

This sequence belongs to the phycobiliprotein family. In terms of assembly, heterohexamer of two alpha chains, one alpha-B chain and three beta chains. In terms of processing, contains one covalently linked phycocyanobilin chromophore. The chromophore is added by phycocyanobilin lyase CpcS 1.

It is found in the cellular thylakoid membrane. In terms of biological role, light-harvesting photosynthetic bile pigment-protein from the phycobiliprotein complex. Allophycocyanin has a maximum absorption at approximately 650 to 653 nanometers. The chain is Allophycocyanin subunit alpha 1 (apcA1) from Nostoc sp. (strain PCC 7120 / SAG 25.82 / UTEX 2576).